We begin with the raw amino-acid sequence, 222 residues long: Myosin regulatory light chain 2 (222 aa).

Residues 1-65 (MADEKKKVKK…RGSRKSKRAG (65 aa)) are disordered. A2 carries the N-acetylalanine modification. Residues 19-53 (TSETASEAASEAATPAPAATPAPAASATGSKRASG) show a composition bias toward low complexity. Phosphoserine occurs at positions 66 and 67. EF-hand domains follow at residues 75-110 (KQIA…VGKI), 147-180 (DEDE…FGDK), and 181-216 (FTMK…KGEE). Positions 88, 90, 92, and 99 each coordinate Ca(2+).

As to quaternary structure, myosin is a hexamer of 2 heavy chains and 4 light chains.

The chain is Myosin regulatory light chain 2 (Mlc2) from Drosophila melanogaster (Fruit fly).